We begin with the raw amino-acid sequence, 274 residues long: Large ribosomal subunit protein uL2 (274 aa).

The segment at Ala224–Tyr256 is disordered. Residues Asp229–Val246 show a composition bias toward basic and acidic residues.

Belongs to the universal ribosomal protein uL2 family. As to quaternary structure, part of the 50S ribosomal subunit. Forms a bridge to the 30S subunit in the 70S ribosome.

Its function is as follows. One of the primary rRNA binding proteins. Required for association of the 30S and 50S subunits to form the 70S ribosome, for tRNA binding and peptide bond formation. It has been suggested to have peptidyltransferase activity; this is somewhat controversial. Makes several contacts with the 16S rRNA in the 70S ribosome. The polypeptide is Large ribosomal subunit protein uL2 (Acidovorax ebreus (strain TPSY) (Diaphorobacter sp. (strain TPSY))).